We begin with the raw amino-acid sequence, 139 residues long: ATP synthase epsilon chain, chloroplastic (139 aa).

This sequence belongs to the ATPase epsilon chain family. F-type ATPases have 2 components, CF(1) - the catalytic core - and CF(0) - the membrane proton channel. CF(1) has five subunits: alpha(3), beta(3), gamma(1), delta(1), epsilon(1). CF(0) has three main subunits: a, b and c.

Its subcellular location is the plastid. The protein localises to the chloroplast thylakoid membrane. Its function is as follows. Produces ATP from ADP in the presence of a proton gradient across the membrane. The polypeptide is ATP synthase epsilon chain, chloroplastic (Welwitschia mirabilis (Tree tumbo)).